Consider the following 419-residue polypeptide: AT-rich binding protein (419 aa).

The C2H2-type 1 zinc-finger motif lies at 29-52 (IVCHTCQEELQTQDAFWKHIQDEH). The tract at residues 121–179 (LHEAQHQQQQQQQQHQQQQQQQQHQQQQQHQHHQHQQQQQHLHQQQQQQQQQQRDAAKE) is disordered. Composition is skewed to low complexity over residues 126 to 149 (HQQQ…QQQQ) and 156 to 173 (QQQQ…QQQQ). 2 consecutive C2H2-type zinc fingers follow at residues 352–376 (YVCD…RVVH) and 382–405 (FNCD…KKKH).

It is found in the nucleus. Its function is as follows. May be a transcription factor for genes having (A+T) stretches in their promoter and/or enhancer regions. Binds to AT rich DNA. The sequence is that of AT-rich binding protein from Drosophila grimshawi (Hawaiian fruit fly).